Here is a 217-residue protein sequence, read N- to C-terminus: Protein-methionine-sulfoxide reductase heme-binding subunit MsrQ (217 aa).

A run of 4 helical transmembrane segments spans residues 82–102, 118–138, 150–170, and 180–200; these read MLGL…LLVD, PFIT…ATST, WQWL…HYWW, and EVSI…WWVW.

This sequence belongs to the MsrQ family. As to quaternary structure, heterodimer of a catalytic subunit (MsrP) and a heme-binding subunit (MsrQ). Requires FMN as cofactor. The cofactor is heme b.

The protein localises to the cell inner membrane. Its function is as follows. Part of the MsrPQ system that repairs oxidized periplasmic proteins containing methionine sulfoxide residues (Met-O), using respiratory chain electrons. Thus protects these proteins from oxidative-stress damage caused by reactive species of oxygen and chlorine generated by the host defense mechanisms. MsrPQ is essential for the maintenance of envelope integrity under bleach stress, rescuing a wide series of structurally unrelated periplasmic proteins from methionine oxidation. MsrQ provides electrons for reduction to the reductase catalytic subunit MsrP, using the quinone pool of the respiratory chain. The protein is Protein-methionine-sulfoxide reductase heme-binding subunit MsrQ of Ralstonia nicotianae (strain ATCC BAA-1114 / GMI1000) (Ralstonia solanacearum).